We begin with the raw amino-acid sequence, 428 residues long: Stromal membrane-associated protein 2 (428 aa).

Positions 13 to 139 (QAVLANLLLE…INVLRKEKDD (127 aa)) constitute an Arf-GAP domain. The segment at 28 to 51 (CADCQSKGPRWASWNIGVFICIRC) adopts a C4-type zinc-finger fold. A phosphoserine mark is found at Ser127, Ser219, Ser224, Ser230, and Ser239. Positions 163–231 (MPQKKEDAQL…SVSRKAVGSM (69 aa)) are interaction with clathrin heavy chains. The disordered stretch occupies residues 218 to 262 (PSPSSVSRKAVGSMPTAGSAGSVPENLNLFPEPGSKSEETGKKQL). Residues 252–262 (SKSEETGKKQL) show a composition bias toward basic and acidic residues. Residues 339–428 (MGGMQASMMG…NQTLSPQMWK (90 aa)) form an interaction with PICALM region.

Interacts with ARF1. Interacts with PICALM and clathrin heavy chains.

Its subcellular location is the cytoplasm. GTPase activating protein that acts on ARF1. Can also activate ARF6 (in vitro). May play a role in clathrin-dependent retrograde transport from early endosomes to the trans-Golgi network. The chain is Stromal membrane-associated protein 2 (Smap2) from Mus musculus (Mouse).